Here is a 118-residue protein sequence, read N- to C-terminus: UPF0102 protein RHA1_ro06551 (118 aa).

It belongs to the UPF0102 family.

The polypeptide is UPF0102 protein RHA1_ro06551 (Rhodococcus jostii (strain RHA1)).